A 65-amino-acid polypeptide reads, in one-letter code: MSKLKGPDGRAGDRLPNGMPAVSWERRWTEGALPLWLVATAGGTAVIFVLGIFFYGSYTGIGNAG.

A helical membrane pass occupies residues 35–55 (LWLVATAGGTAVIFVLGIFFY).

Belongs to the PsbJ family. As to quaternary structure, PSII is composed of 1 copy each of membrane proteins PsbA, PsbB, PsbC, PsbD, PsbE, PsbF, PsbH, PsbI, PsbJ, PsbK, PsbL, PsbM, PsbT, PsbX, PsbY, Psb30/Ycf12, peripheral proteins PsbO, CyanoQ (PsbQ), PsbU, PsbV and a large number of cofactors. It forms dimeric complexes.

The protein resides in the cellular thylakoid membrane. In terms of biological role, one of the components of the core complex of photosystem II (PSII). PSII is a light-driven water:plastoquinone oxidoreductase that uses light energy to abstract electrons from H(2)O, generating O(2) and a proton gradient subsequently used for ATP formation. It consists of a core antenna complex that captures photons, and an electron transfer chain that converts photonic excitation into a charge separation. The sequence is that of Photosystem II reaction center protein J from Prochlorococcus marinus (strain NATL2A).